The chain runs to 600 residues: Glutamine--fructose-6-phosphate aminotransferase [isomerizing] (600 aa).

Residue cysteine 2 is the Nucleophile; for GATase activity of the active site. One can recognise a Glutamine amidotransferase type-2 domain in the interval 2 to 217 (CGIVGYIGQL…DKEMVIVTDD (216 aa)). SIS domains lie at 283 to 422 (IAAA…KNGI) and 452 to 590 (IARE…VDKP). Lysine 595 functions as the For Fru-6P isomerization activity in the catalytic mechanism.

As to quaternary structure, homodimer.

It localises to the cytoplasm. It catalyses the reaction D-fructose 6-phosphate + L-glutamine = D-glucosamine 6-phosphate + L-glutamate. Its function is as follows. Catalyzes the first step in hexosamine metabolism, converting fructose-6P into glucosamine-6P using glutamine as a nitrogen source. In Bacillus subtilis (strain 168), this protein is Glutamine--fructose-6-phosphate aminotransferase [isomerizing].